The sequence spans 373 residues: Glutamate 5-kinase (373 aa).

Lysine 16 serves as a coordination point for ATP. Residues serine 56, aspartate 143, and asparagine 155 each contribute to the substrate site. 175-176 (TD) lines the ATP pocket. Residues 281–359 (RGRLTLDDGA…SRIDSLLGYK (79 aa)) enclose the PUA domain.

Belongs to the glutamate 5-kinase family.

The protein localises to the cytoplasm. It carries out the reaction L-glutamate + ATP = L-glutamyl 5-phosphate + ADP. It functions in the pathway amino-acid biosynthesis; L-proline biosynthesis; L-glutamate 5-semialdehyde from L-glutamate: step 1/2. In terms of biological role, catalyzes the transfer of a phosphate group to glutamate to form L-glutamate 5-phosphate. In Saccharophagus degradans (strain 2-40 / ATCC 43961 / DSM 17024), this protein is Glutamate 5-kinase.